The chain runs to 179 residues: Protein YjaZ (179 aa).

The sequence is that of Protein YjaZ from Escherichia coli (strain K12).